The chain runs to 348 residues: Photosystem II protein D1 (348 aa).

3 helical membrane passes run 33 to 50 (YIGW…LATV), 122 to 137 (HFIF…EWEF), and 146 to 160 (WIFV…AASA). His-122 is a binding site for chlorophyll a. Tyr-130 serves as a coordination point for pheophytin a. The [CaMn4O5] cluster site is built by Asp-174 and Glu-193. A helical transmembrane segment spans residues 201-222 (FHILGVAAVFGGSLFSAMHGSL). His-202 lines the chlorophyll a pocket. Residues His-219 and 268–269 (SF) each bind a quinone. His-219 provides a ligand contact to Fe cation. His-276 contacts Fe cation. Residues 278–292 (FLAAWPVIGIWFTSL) traverse the membrane as a helical segment. Residues His-336, Glu-337, Asp-346, and Ala-348 each contribute to the [CaMn4O5] cluster site.

Belongs to the reaction center PufL/M/PsbA/D family. In terms of assembly, PSII is composed of 1 copy each of membrane proteins PsbA, PsbB, PsbC, PsbD, PsbE, PsbF, PsbH, PsbI, PsbJ, PsbK, PsbL, PsbM, PsbT, PsbX, PsbY, PsbZ, Psb30/Ycf12, at least 3 peripheral proteins of the oxygen-evolving complex and a large number of cofactors. It forms dimeric complexes. It depends on The D1/D2 heterodimer binds P680, chlorophylls that are the primary electron donor of PSII, and subsequent electron acceptors. It shares a non-heme iron and each subunit binds pheophytin, quinone, additional chlorophylls, carotenoids and lipids. D1 provides most of the ligands for the Mn4-Ca-O5 cluster of the oxygen-evolving complex (OEC). There is also a Cl(-1) ion associated with D1 and D2, which is required for oxygen evolution. The PSII complex binds additional chlorophylls, carotenoids and specific lipids. as a cofactor. Post-translationally, tyr-165 forms a radical intermediate that is referred to as redox-active TyrZ, YZ or Y-Z.

The protein localises to the plastid. It localises to the chloroplast thylakoid membrane. It catalyses the reaction 2 a plastoquinone + 4 hnu + 2 H2O = 2 a plastoquinol + O2. Functionally, photosystem II (PSII) is a light-driven water:plastoquinone oxidoreductase that uses light energy to abstract electrons from H(2)O, generating O(2) and a proton gradient subsequently used for ATP formation. It consists of a core antenna complex that captures photons, and an electron transfer chain that converts photonic excitation into a charge separation. The D1/D2 (PsbA/PsbD) reaction center heterodimer binds P680, the primary electron donor of PSII as well as several subsequent electron acceptors. The sequence is that of Photosystem II protein D1 from Heterocapsa triquetra (Dinoflagellate).